We begin with the raw amino-acid sequence, 403 residues long: NADH-quinone oxidoreductase subunit D (403 aa).

It belongs to the complex I 49 kDa subunit family. In terms of assembly, NDH-1 is composed of 14 different subunits. Subunits NuoB, C, D, E, F, and G constitute the peripheral sector of the complex.

It is found in the cell inner membrane. The enzyme catalyses a quinone + NADH + 5 H(+)(in) = a quinol + NAD(+) + 4 H(+)(out). Functionally, NDH-1 shuttles electrons from NADH, via FMN and iron-sulfur (Fe-S) centers, to quinones in the respiratory chain. The immediate electron acceptor for the enzyme in this species is believed to be ubiquinone. Couples the redox reaction to proton translocation (for every two electrons transferred, four hydrogen ions are translocated across the cytoplasmic membrane), and thus conserves the redox energy in a proton gradient. This Pelobacter propionicus (strain DSM 2379 / NBRC 103807 / OttBd1) protein is NADH-quinone oxidoreductase subunit D.